The chain runs to 833 residues: Leucine--tRNA ligase (833 aa).

The 'HIGH' region motif lies at 41 to 52; the sequence is PYPSGAGLHVGH. Positions 610–614 match the 'KMSKS' region motif; the sequence is KMSKS. Lys-613 is a binding site for ATP.

This sequence belongs to the class-I aminoacyl-tRNA synthetase family.

It is found in the cytoplasm. It catalyses the reaction tRNA(Leu) + L-leucine + ATP = L-leucyl-tRNA(Leu) + AMP + diphosphate. The chain is Leucine--tRNA ligase from Streptococcus pyogenes serotype M28 (strain MGAS6180).